The primary structure comprises 333 residues: Anthranilate phosphoribosyltransferase (333 aa).

Residues glycine 81, 84-85 (GD), threonine 89, 91-94 (NIST), 109-117 (KHGNRSVSS), and alanine 121 each bind 5-phospho-alpha-D-ribose 1-diphosphate. Glycine 81 is a binding site for anthranilate. Serine 93 is a binding site for Mg(2+). Asparagine 112 contributes to the anthranilate binding site. Arginine 167 contributes to the anthranilate binding site. Aspartate 225 and glutamate 226 together coordinate Mg(2+).

This sequence belongs to the anthranilate phosphoribosyltransferase family. Homodimer. Mg(2+) serves as cofactor.

The catalysed reaction is N-(5-phospho-beta-D-ribosyl)anthranilate + diphosphate = 5-phospho-alpha-D-ribose 1-diphosphate + anthranilate. The protein operates within amino-acid biosynthesis; L-tryptophan biosynthesis; L-tryptophan from chorismate: step 2/5. Functionally, catalyzes the transfer of the phosphoribosyl group of 5-phosphorylribose-1-pyrophosphate (PRPP) to anthranilate to yield N-(5'-phosphoribosyl)-anthranilate (PRA). This Haemophilus influenzae (strain PittEE) protein is Anthranilate phosphoribosyltransferase.